We begin with the raw amino-acid sequence, 495 residues long: Neuronal acetylcholine receptor subunit alpha-3 (495 aa).

The first 21 residues, 1–21 (MARRSRLRRLLLLLLLPVAST), serve as a signal peptide directing secretion. Over 22 to 240 (SDAEHRLFER…PLFYTINLII (219 aa)) the chain is Extracellular. Asn45 and Asn162 each carry an N-linked (GlcNAc...) asparagine glycan. 2 disulfide bridges follow: Cys149–Cys163 and Cys213–Cys214. A helical transmembrane segment spans residues 241–256 (PCLLISFLTVLVFYLP). Residues 257–258 (SD) lie on the Cytoplasmic side of the membrane. A helical transmembrane segment spans residues 259–275 (CGEKVTLCISVLLSLTV). Glu261 lines the Na(+) pocket. At 276-297 (FLLVITETIPSTSLVIPLIGEY) the chain is on the extracellular side. Residues 298–316 (LLFTMIFVTLSIVITVFVL) form a helical membrane-spanning segment. Topologically, residues 317-464 (NVHYRTPTTH…QDDWKYVAMV (148 aa)) are cytoplasmic. A phosphoserine mark is found at Ser403 and Ser406. A helical transmembrane segment spans residues 465–483 (IDRIFLWVFILVCILGTAG). At 484 to 495 (LFLQPLMTRDDA) the chain is on the extracellular side.

The protein belongs to the ligand-gated ion channel (TC 1.A.9) family. Acetylcholine receptor (TC 1.A.9.1) subfamily. Alpha-3/CHRNA3 sub-subfamily. In terms of assembly, neuronal AChR is composed of two different types of subunits: alpha and beta. CHRNA3/Alpha-3 subunit can be combined to CHRNB2/beta-2 or CHRNB4/beta-4 to give rise to functional receptors. Part of a complex composed of STUB1/CHIP, VCP/p97, CHRNA3, and UBXN2A that modulates the ubiquitination and endoplasmic reticulum-associated degradation (ERAD) of CHRNA3. Within the complex UBXN2A acts as a scaffold protein required for the interaction of CHRNA3 with VCP/p97, this interaction also inhibits CHRNA3 ubiquitination by STUB1/CHIP and subsequently ERAD. Interacts with UBXN2A (via SEP domain), the interaction is required for the interaction of CHRNA3 in the STUB1:VCP:UBXN2A complex. Interacts with RIC3; which is required for proper folding and assembly. Interacts with LYPD6. Post-translationally, ubiquitinated; by STUB1/CHIP and thereafter degraded by the 26S proteosome complex.

Its subcellular location is the synaptic cell membrane. The protein localises to the cell membrane. The protein resides in the endoplasmic reticulum. It is found in the golgi apparatus. It carries out the reaction K(+)(in) = K(+)(out). The catalysed reaction is Na(+)(in) = Na(+)(out). The enzyme catalyses Ca(2+)(in) = Ca(2+)(out). Activated by a myriad of ligands such as acetylcholine, cytisine, nicotine, choline and epibatidine. The heteropentamer CHRNA3:CHRNB2 activity is blocked by alpha-conotoxins ImI, ImII, PnIA, GID and MII. The heteropentamer CHRNA3:CHRNB4 activity is blocked by the alpha-conotoxin ImI and AuIB. Component of neuronal acetylcholine receptors (nAChRs) that function as pentameric, ligand-gated cation channels with high calcium permeability among other activities. nAChRs are excitatory neurotrasnmitter receptors formed by a collection of nAChR subunits known to mediate synaptic transmission in the nervous system and the neuromuscular junction. Each nAchR subunit confers differential attributes to channel properties, including activation, deactivation and desensitization kinetics, pH sensitivity, cation permeability, and binding to allosteric modulators. CHRNA3 forms heteropentameric neuronal acetylcholine receptors with CHRNB2 and CHRNB4. CHRNA3:CHRNB4 being predominant in neurons of the autonomic ganglia, it is known as ganglionic nicotinic receptor. CHRNA3:CHRNB4 also plays an important role in the habenulo-interpeduncular tract, modulating the mesolimbic dopamine system and affecting reward circuits and addiction. Hypothalamic CHRNA3:CHRNB4 nAChR activation by nicotine leads to activation of POMC neurons and a decrease in food intake. Also expressed in the urothelium where it modulates reflex bladder activity by increasing intracellular calcium through extracellular influx and basal ATP release. This chain is Neuronal acetylcholine receptor subunit alpha-3 (CHRNA3), found in Bos taurus (Bovine).